Reading from the N-terminus, the 438-residue chain is uncharacterized protein (438 aa).

Disordered stretches follow at residues 1–22 and 156–264; these read MRDN…TYDP and DTAK…PWRP. Basic and acidic residues predominate over residues 156-170; that stretch reads DTAKSNEKLQGDESK. Low complexity predominate over residues 171–189; it reads SSNGSSSTSTTTQRGSTNS. Over residues 191–206 the composition is skewed to basic and acidic residues; sequence TKVKALKIEVKKKSDS.

This sequence belongs to the adhesin P1 family.

This is an uncharacterized protein from Mycoplasma pneumoniae (strain ATCC 29342 / M129 / Subtype 1) (Mycoplasmoides pneumoniae).